The following is a 61-amino-acid chain: DNA-directed RNA polymerase subunit Rpo6 (61 aa).

The protein belongs to the archaeal Rpo6/eukaryotic RPB6 RNA polymerase subunit family. In terms of assembly, part of the RNA polymerase complex.

The protein resides in the cytoplasm. It catalyses the reaction RNA(n) + a ribonucleoside 5'-triphosphate = RNA(n+1) + diphosphate. Its function is as follows. DNA-dependent RNA polymerase (RNAP) catalyzes the transcription of DNA into RNA using the four ribonucleoside triphosphates as substrates. This chain is DNA-directed RNA polymerase subunit Rpo6, found in Methanothermobacter thermautotrophicus (strain ATCC 29096 / DSM 1053 / JCM 10044 / NBRC 100330 / Delta H) (Methanobacterium thermoautotrophicum).